The chain runs to 267 residues: 3-deoxy-manno-octulosonate cytidylyltransferase (267 aa).

Belongs to the KdsB family.

The protein resides in the cytoplasm. It catalyses the reaction 3-deoxy-alpha-D-manno-oct-2-ulosonate + CTP = CMP-3-deoxy-beta-D-manno-octulosonate + diphosphate. The protein operates within nucleotide-sugar biosynthesis; CMP-3-deoxy-D-manno-octulosonate biosynthesis; CMP-3-deoxy-D-manno-octulosonate from 3-deoxy-D-manno-octulosonate and CTP: step 1/1. It functions in the pathway bacterial outer membrane biogenesis; lipopolysaccharide biosynthesis. Functionally, activates KDO (a required 8-carbon sugar) for incorporation into bacterial lipopolysaccharide in Gram-negative bacteria. The sequence is that of 3-deoxy-manno-octulosonate cytidylyltransferase from Paraburkholderia phymatum (strain DSM 17167 / CIP 108236 / LMG 21445 / STM815) (Burkholderia phymatum).